The chain runs to 433 residues: Urokinase-type plasminogen activator (433 aa).

Residues 1 to 20 form the signal peptide; that stretch reads MKVWLASLFLCALVVKNSEG. Residues 28-64 form the EGF-like domain; sequence DESNCGCQNGGVCVSYKYFSRIRRCSCPRKFQGEHCE. 6 cysteine pairs are disulfide-bonded: C32–C40, C34–C52, C54–C63, C71–C152, C92–C134, and C123–C147. The segment at 35–58 is binds urokinase plasminogen activator surface receptor; sequence QNGGVCVSYKYFSRIRRCSCPRKF. Residues 71–152 enclose the Kringle domain; that stretch reads CYHGNGDSYR…FVQECMVHDC (82 aa). The connecting peptide stretch occupies residues 153-179; sequence SLSKKPSSSVDQQGFQCGQKALRPRFK. S159 is modified (phosphoserine). 6 disulfide bridges follow: C169-C301, C211-C227, C219-C290, C315-C384, C347-C363, and C374-C402. Positions 180–426 constitute a Peptidase S1 domain; it reads IVGGEFTEVE…FLDWIQSHIG (247 aa). Catalysis depends on charge relay system residues H226 and D277. Residue S378 is the Charge relay system of the active site.

It belongs to the peptidase S1 family. In terms of assembly, found in high and low molecular mass forms. Each consists of two chains, A and B. The high molecular mass form contains a long chain A which is cleaved to yield a short chain A. Forms heterodimer with SERPINA5. Binds LRP1B; binding is followed by internalization and degradation. Interacts with MRC2. Interacts with PLAUR. In complex with SERPINE1, interacts with PLAUR/uPAR. Interacts with SORL1 and LRP1, either alone or in complex with SERPINE1; these interactions are abolished in the presence of LRPAP1/RAP. The ternary complex composed of PLAUR-PLAU-PAI1 also interacts with SORLA. Post-translationally, produced as an inactive single-chain protein (pro-uPA or sc-uPA), is processed into the active disulfide-linked two-chain form of PLAU/uPA by a proteolytic event mediated, at least, by TMPRSS4.

It is found in the secreted. It carries out the reaction Specific cleavage of Arg-|-Val bond in plasminogen to form plasmin.. Its activity is regulated as follows. Inhibited by SERPINA5. Inhibited by SERPINE1. Its function is as follows. Specifically cleaves the zymogen plasminogen to form the active enzyme plasmin. The protein is Urokinase-type plasminogen activator (Plau) of Mus musculus (Mouse).